Here is a 136-residue protein sequence, read N- to C-terminus: Histone H3.3C (136 aa).

Over residues 1-10 (MALTKQTARK) the composition is skewed to polar residues. The segment at 1-44 (MALTKQTARKSTGGKAPRKQLATKATRKSAPSTGGVKKPHRYRP) is disordered. A Phosphothreonine; by HASPIN modification is found at Thr-4. Lys-5 carries the post-translational modification Allysine; alternate. At Lys-5 the chain carries N6,N6,N6-trimethyllysine; alternate. Position 5 is an N6,N6-dimethyllysine; alternate (Lys-5). Residue Lys-5 is modified to N6-(2-hydroxyisobutyryl)lysine; alternate. The residue at position 5 (Lys-5) is an N6-(beta-hydroxybutyryl)lysine; alternate. Lys-5 carries the post-translational modification N6-acetyllysine; alternate. Residue Lys-5 is modified to N6-methyllysine; alternate. Gln-6 carries the 5-glutamyl dopamine; alternate modification. Residue Gln-6 is modified to 5-glutamyl serotonin; alternate. Thr-7 bears the Phosphothreonine; by PKC mark. The residue at position 9 (Arg-9) is a Citrulline; alternate. Arg-9 is subject to Symmetric dimethylarginine; by PRMT5; alternate. Lys-10 is modified (N6,N6,N6-trimethyllysine; alternate). Lys-10 is modified (N6,N6-dimethyllysine; alternate). Lys-10 is subject to N6-(2-hydroxyisobutyryl)lysine; alternate. Residue Lys-10 is modified to N6-(beta-hydroxybutyryl)lysine; alternate. Lys-10 bears the N6-acetyllysine; alternate mark. Residue Lys-10 is modified to N6-methyllysine; alternate. Position 10 is an N6-lactoyllysine; alternate (Lys-10). At Ser-11 the chain carries ADP-ribosylserine; alternate. Ser-11 is modified (phosphoserine; alternate; by AURKB, AURKC, RPS6KA3, RPS6KA4 and RPS6KA5). Thr-12 carries the phosphothreonine; by PKC modification. Position 15 is an N6-(2-hydroxyisobutyryl)lysine; alternate (Lys-15). Lys-15 carries the post-translational modification N6-(beta-hydroxybutyryl)lysine; alternate. At Lys-15 the chain carries N6-acetyllysine; alternate. Lys-15 carries the post-translational modification N6-lactoyllysine; alternate. N6-glutaryllysine; alternate is present on Lys-15. Residue Lys-15 is modified to N6-succinyllysine; alternate. Citrulline; alternate is present on Arg-18. At Arg-18 the chain carries Asymmetric dimethylarginine; by CARM1; alternate. 2 positions are modified to N6-(2-hydroxyisobutyryl)lysine; alternate: Lys-19 and Lys-24. An N6-(beta-hydroxybutyryl)lysine; alternate mark is found at Lys-19 and Lys-24. An N6-acetyllysine; alternate mark is found at Lys-19 and Lys-24. Residues Lys-19 and Lys-24 each carry the N6-methyllysine; alternate modification. Lys-19 and Lys-24 each carry N6-lactoyllysine; alternate. N6-glutaryllysine; alternate is present on residues Lys-19 and Lys-24. Residues Lys-19 and Lys-24 each carry the N6-butyryllysine; alternate modification. The residue at position 27 (Arg-27) is a Citrulline. Residue Lys-28 is modified to N6,N6,N6-trimethyllysine; alternate. Lys-28 bears the N6,N6-dimethyllysine; alternate mark. Lys-28 carries the post-translational modification N6-(2-hydroxyisobutyryl)lysine; alternate. At Lys-28 the chain carries N6-acetyllysine; alternate. Lys-28 is subject to N6-methyllysine; alternate. Lys-28 bears the N6-lactoyllysine; alternate mark. At Lys-28 the chain carries N6-glutaryllysine; alternate. Ser-29 is modified (ADP-ribosylserine; alternate). At Ser-29 the chain carries Phosphoserine; alternate; by AURKB, AURKC and RPS6KA5. At Ser-32 the chain carries Phosphoserine. Lys-37 carries the N6,N6,N6-trimethyllysine; alternate modification. Position 37 is an N6,N6-dimethyllysine; alternate (Lys-37). Position 37 is an N6-(2-hydroxyisobutyryl)lysine; alternate (Lys-37). Lys-37 bears the N6-acetyllysine; alternate mark. Lys-37 carries the post-translational modification N6-methyllysine; alternate. Lys-38 carries the N6-methyllysine modification. Residue Tyr-42 is modified to Phosphotyrosine. An N6,N6,N6-trimethyllysine; alternate modification is found at Lys-57. Lys-57 bears the N6-(2-hydroxyisobutyryl)lysine; alternate mark. Lys-57 is subject to N6-(beta-hydroxybutyryl)lysine; alternate. Position 57 is an N6-acetyllysine; alternate (Lys-57). N6-lactoyllysine; alternate is present on Lys-57. N6-glutaryllysine; alternate is present on Lys-57. Position 57 is an N6-succinyllysine; alternate (Lys-57). Lys-57 is subject to N6-methyllysine; by EHMT2; alternate. Ser-58 is subject to Phosphoserine. Residues Lys-65 and Lys-80 each carry the N6-(2-hydroxyisobutyryl)lysine; alternate modification. Lys-65 and Lys-80 each carry N6-methyllysine; alternate. Lys-80 bears the N6,N6,N6-trimethyllysine; alternate mark. An N6,N6-dimethyllysine; alternate modification is found at Lys-80. N6-acetyllysine; alternate is present on Lys-80. An N6-lactoyllysine; alternate modification is found at Lys-80. Lys-80 bears the N6-glutaryllysine; alternate mark. Lys-80 bears the N6-succinyllysine; alternate mark. Position 81 is a phosphothreonine (Thr-81). Ser-87 is modified (phosphoserine). Phosphothreonine is present on Thr-108. Residues Lys-116 and Lys-123 each carry the N6-acetyllysine; alternate modification. N6-glutaryllysine; alternate occurs at positions 116 and 123. Lys-123 bears the N6-(2-hydroxyisobutyryl)lysine; alternate mark. Lys-123 carries the N6-methyllysine; alternate modification. Lys-123 bears the N6-succinyllysine; alternate mark.

It belongs to the histone H3 family. As to quaternary structure, the nucleosome is a histone octamer containing two molecules each of H2A, H2B, H3 and H4 assembled in one H3-H4 heterotetramer and two H2A-H2B heterodimers. The octamer wraps approximately 147 bp of DNA. Post-translationally, acetylation is generally linked to gene activation. Acetylation on Lys-10 (H3K9ac) impairs methylation at Arg-9 (H3R8me2s). Acetylation on Lys-19 (H3K18ac) and Lys-24 (H3K24ac) favors methylation at Arg-18 (H3R17me). Acetylation at Lys-123 (H3K122ac) by EP300/p300 plays a central role in chromatin structure: localizes at the surface of the histone octamer and stimulates transcription, possibly by promoting nucleosome instability. In terms of processing, citrullination at Arg-9 (H3R8ci) and/or Arg-18 (H3R17ci) by PADI4 impairs methylation and represses transcription. Butyrylation of histones marks active promoters and competes with histone acetylation. It is present during late spermatogenesis. Post-translationally, asymmetric dimethylation at Arg-18 (H3R17me2a) by CARM1 is linked to gene activation. Symmetric dimethylation at Arg-9 (H3R8me2s) by PRMT5 is linked to gene repression. In terms of processing, methylation at Lys-5 (H3K4me), Lys-37 and Lys-80 are linked to gene activation. Methylation at Lys-5 (H3K4me) facilitates subsequent acetylation of H3 and H4. Methylation at Lys-80 is associated with DNA double-strand break (DSB) responses and is a specific target for TP53BP1. Methylation at Lys-10 (H3K9me) and Lys-28 (H3K27me) are linked to gene repression. Methylation at Lys-10 (H3K9me) is a specific target for HP1 proteins (CBX1, CBX3 and CBX5) and prevents subsequent phosphorylation at Ser-11 (H3S10ph) and acetylation of H3 and H4. Methylation at Lys-5 (H3K4me) and Lys-80 require preliminary monoubiquitination of H2B at 'Lys-120'. Methylation at Lys-10 (H3K9me) and Lys-28 (H3K27me) are enriched in inactive X chromosome chromatin. Monomethylation at Lys-57 (H3K56me1) by EHMT2/G9A in G1 phase promotes interaction with PCNA and is required for DNA replication. Phosphorylated at Thr-4 (H3T3ph) by HASPIN during prophase and dephosphorylated during anaphase. Phosphorylation at Ser-11 (H3S10ph) by AURKB is crucial for chromosome condensation and cell-cycle progression during mitosis and meiosis. In addition phosphorylation at Ser-11 (H3S10ph) by RPS6KA4 and RPS6KA5 is important during interphase because it enables the transcription of genes following external stimulation, like mitogens, stress, growth factors or UV irradiation and result in the activation of genes, such as c-fos and c-jun. Phosphorylation at Ser-11 (H3S10ph), which is linked to gene activation, prevents methylation at Lys-10 (H3K9me) but facilitates acetylation of H3 and H4. Phosphorylation at Ser-11 (H3S10ph) by AURKB mediates the dissociation of HP1 proteins (CBX1, CBX3 and CBX5) from heterochromatin. Phosphorylation at Ser-11 (H3S10ph) is also an essential regulatory mechanism for neoplastic cell transformation. Phosphorylated at Ser-29 (H3S28ph) by MAP3K20 isoform 1, RPS6KA5 or AURKB during mitosis or upon ultraviolet B irradiation. Phosphorylation at Thr-7 (H3T6ph) by PRKCB is a specific tag for epigenetic transcriptional activation that prevents demethylation of Lys-5 (H3K4me) by LSD1/KDM1A. At centromeres, specifically phosphorylated at Thr-12 (H3T11ph) from prophase to early anaphase, by DAPK3 and PKN1. Phosphorylation at Thr-12 (H3T11ph) by PKN1 or isoform M2 of PKM (PKM2) is a specific tag for epigenetic transcriptional activation that promotes demethylation of Lys-10 (H3K9me) by KDM4C/JMJD2C. Phosphorylation at Tyr-42 (H3Y41ph) by JAK2 promotes exclusion of CBX5 (HP1 alpha) from chromatin. Post-translationally, lysine deamination at Lys-5 (H3K4all) to form allysine is mediated by LOXL2. Allysine formation by LOXL2 only takes place on H3K4me3 and results in gene repression. In terms of processing, succinylation at Lys-80 (H3K79succ) by KAT2A takes place with a maximum frequency around the transcription start sites of genes. It gives a specific tag for epigenetic transcription activation. Desuccinylation at Lys-123 (H3K122succ) by SIRT7 in response to DNA damage promotes chromatin condensation and double-strand breaks (DSBs) repair. Serine ADP-ribosylation constitutes the primary form of ADP-ribosylation of proteins in response to DNA damage. Serine ADP-ribosylation at Ser-11 (H3S10ADPr) is mutually exclusive with phosphorylation at Ser-11 (H3S10ph) and impairs acetylation at Lys-10 (H3K9ac).

It is found in the nucleus. The protein localises to the chromosome. In terms of biological role, core component of nucleosome. Nucleosomes wrap and compact DNA into chromatin, limiting DNA accessibility to the cellular machineries which require DNA as a template. Histones thereby play a central role in transcription regulation, DNA repair, DNA replication and chromosomal stability. DNA accessibility is regulated via a complex set of post-translational modifications of histones, also called histone code, and nucleosome remodeling. The protein is Histone H3.3C of Mus musculus (Mouse).